A 226-amino-acid polypeptide reads, in one-letter code: MRFGIVVFPGSNCDIDCYYVLKDELQQEVEYIWHEEELKEGFDCIILPGGFSYGDYLRCGAVAQFSKVMEGVKVYAHAGGLVVGICNGFQILTEAGLLPGALVRNKGLKFICDTTPLKVTEANSPFTNQYQKGEVIQIPIAHGEGNYVVDEVTLAEMKTKGQILFTYGENPNGSTGDIAGICNEGKNVMGLMPHPERASEALLGNVDGKKFFQSIMHYLEGGKNND.

The region spanning 2–225 is the Glutamine amidotransferase type-1 domain; it reads RFGIVVFPGS…MHYLEGGKNN (224 aa). The active-site Nucleophile is the Cys86. Catalysis depends on residues His194 and Glu196.

As to quaternary structure, part of the FGAM synthase complex composed of 1 PurL, 1 PurQ and 2 PurS subunits.

Its subcellular location is the cytoplasm. It catalyses the reaction N(2)-formyl-N(1)-(5-phospho-beta-D-ribosyl)glycinamide + L-glutamine + ATP + H2O = 2-formamido-N(1)-(5-O-phospho-beta-D-ribosyl)acetamidine + L-glutamate + ADP + phosphate + H(+). The enzyme catalyses L-glutamine + H2O = L-glutamate + NH4(+). It participates in purine metabolism; IMP biosynthesis via de novo pathway; 5-amino-1-(5-phospho-D-ribosyl)imidazole from N(2)-formyl-N(1)-(5-phospho-D-ribosyl)glycinamide: step 1/2. Functionally, part of the phosphoribosylformylglycinamidine synthase complex involved in the purines biosynthetic pathway. Catalyzes the ATP-dependent conversion of formylglycinamide ribonucleotide (FGAR) and glutamine to yield formylglycinamidine ribonucleotide (FGAM) and glutamate. The FGAM synthase complex is composed of three subunits. PurQ produces an ammonia molecule by converting glutamine to glutamate. PurL transfers the ammonia molecule to FGAR to form FGAM in an ATP-dependent manner. PurS interacts with PurQ and PurL and is thought to assist in the transfer of the ammonia molecule from PurQ to PurL. The chain is Phosphoribosylformylglycinamidine synthase subunit PurQ from Alkaliphilus metalliredigens (strain QYMF).